The following is a 198-amino-acid chain: 5'-deoxynucleotidase ETA_12010 (198 aa).

Residues 18-19 (RW) and histidine 33 contribute to the substrate site. The 113-residue stretch at 30–142 (VSEHSLQVAM…VKQADALCAY (113 aa)) folds into the HD domain. A divalent metal cation contacts are provided by histidine 33, histidine 68, and aspartate 69. Substrate is bound by residues aspartate 69, 77–80 (DLPT), and aspartate 137. Residue aspartate 137 participates in a divalent metal cation binding.

This sequence belongs to the 5DNU family. Homodimer. A divalent metal cation serves as cofactor.

It is found in the cytoplasm. The enzyme catalyses a 2'-deoxyribonucleoside 5'-phosphate + H2O = a 2'-deoxyribonucleoside + phosphate. Catalyzes the strictly specific dephosphorylation of 2'-deoxyribonucleoside 5'-monophosphates. The chain is 5'-deoxynucleotidase ETA_12010 from Erwinia tasmaniensis (strain DSM 17950 / CFBP 7177 / CIP 109463 / NCPPB 4357 / Et1/99).